The sequence spans 455 residues: 2-succinylbenzoate--CoA ligase (455 aa).

Belongs to the ATP-dependent AMP-binding enzyme family. MenE subfamily.

The catalysed reaction is 2-succinylbenzoate + ATP + CoA = 2-succinylbenzoyl-CoA + AMP + diphosphate. It functions in the pathway quinol/quinone metabolism; 1,4-dihydroxy-2-naphthoate biosynthesis; 1,4-dihydroxy-2-naphthoate from chorismate: step 5/7. The protein operates within quinol/quinone metabolism; menaquinone biosynthesis. Its function is as follows. Converts 2-succinylbenzoate (OSB) to 2-succinylbenzoyl-CoA (OSB-CoA). The protein is 2-succinylbenzoate--CoA ligase of Salmonella typhimurium (strain LT2 / SGSC1412 / ATCC 700720).